Reading from the N-terminus, the 124-residue chain is Small ribosomal subunit protein uS12 (124 aa).

Position 89 is a 3-methylthioaspartic acid (D89).

It belongs to the universal ribosomal protein uS12 family. In terms of assembly, part of the 30S ribosomal subunit. Contacts proteins S8 and S17. May interact with IF1 in the 30S initiation complex.

Functionally, with S4 and S5 plays an important role in translational accuracy. In terms of biological role, interacts with and stabilizes bases of the 16S rRNA that are involved in tRNA selection in the A site and with the mRNA backbone. Located at the interface of the 30S and 50S subunits, it traverses the body of the 30S subunit contacting proteins on the other side and probably holding the rRNA structure together. The combined cluster of proteins S8, S12 and S17 appears to hold together the shoulder and platform of the 30S subunit. The chain is Small ribosomal subunit protein uS12 from Vibrio vulnificus (strain CMCP6).